The chain runs to 1503 residues: MSKLVPIEVTEDRRPTDIKQIQFRLASPEKVMSWSHGEVKKPETINYRTLKPERDGLFCAKIFGPVRDYECLCGKYKKMRYKGVVCEKCGVEVTSTKVRRIRMGHIELVTPVAHIWYVSSLPSRIGTLLGIKMKDLERVLYYEAYIVESGGEAYYDAEAKTPVLKYDVLNEEQYRTLVSRFGELGFKARMGGEVVRDLLDSIDLVDLFTQLKEDIELTKSEAKTKTIAKRLKVIESFLNSGNNPAWMMLTVLPVLPPDLRPLVSLDGGKFAVSDVNDLYRRVINRNQRLKRLVELEAPEIIVRNEKRMLQESVDALFDNGRRANAVKGANKRPLKSLSEIIKGKQGRFRQNLLGKRVDFSGRTVIVVGPSLSMDECGLPKKMALELFKPHLIAKLEDKGYATTVKAAKKMIEDKTNEVWECLAEIVDGYPVLLNRAPTLHKLSIQAFHPKLIDGKAIQLHPLVCAAFNADFDGDQMAVHIPLSSAAIAEAKVLMLASMNILLPASGKAIATPSQDMVLGIYYITLEKNGVKGSNKLFANVDEVRIAIEHDALDIHAKVRTRDDGRIIHTTAGRMLLKAILPNFVPSELWNRVMKKKAINEVVDYVQKHGGIGVTAGFLDRLKNLGFKHATEAGISISIDDIKIPAGKEAKIAESKNRVFEIQKQFEAGLLTEQERYNKIIDVWTDTNNTLATQMMDLVQTDKAGFNSIHMMADSGARGSAAQIRQLAGMRGLMAKPSGEIIETPIISNFKEGLNVVEYFISTHGARKGLADTALKTANAGYLTRKLVDVAQNVKIVEHDCHTHEGIEISDISDQNTLIESLEDRLNGRVLADDVIDPISNEILFAEGTLLDEVSAKVIAEAGIKTAYIRTPTTCKSENGICALCYGVNLATGQIVRRGEAVGIIAAQSIGEPGTQLTLRTFHVGGTASSTAQERQVVAEKEGFIRYYNLKTYVSKEGRNIVANRRNAAVLLVEPKIKAPFSGRVEIQTVHDEVIISVSSKTDTIRYVLRKNEIAKPNELAGVGGQIEGKYYFPYESGAEVQEYESIVETIKDGWNVPSRIPYASEVLVANGAPVTQKIFAKEDGVVKYFLLRGDYLERFEGLKAGYEVIEKGLFATVVDSNNREAVRHYIARGSIIVAEDDAVVDPKTLIAKPKNDESTVIAEWDPYSNPIISETSGTVKFEDIIIGTTATEQYDELTGKTRLMISDHVPAEYKPTIVLASEDGELLRYQVQSKTSIYVEDGAKVKVADIIAKTPKALQKSSDITGGLPRVSELFEGRRPKATALISEIDGVVSFGKSLRGKIRIIVASDNGILKEYFVDKSHTPVVNSGDFVHAGERLTSGIISSHELLRIMGVKTLYNYLVSEVQQVYRSQGVNISDKHIEVIFTQMLRQVKILKSGDTKFIEGDLISKVKFAQENEKIIKLGGRPAIAEPFLVGITRAAVSADSIISAASFQDTTKVLTEAAVSAKVDDLNDLKENVIIGRTIPVGTGIYKDQEIMFGYN.

Zn(2+) is bound by residues C71, C73, C86, and C89. Mg(2+)-binding residues include D470, D472, and D474. Zn(2+) contacts are provided by C800, C874, C881, and C884.

Belongs to the RNA polymerase beta' chain family. As to quaternary structure, the RNAP catalytic core consists of 2 alpha, 1 beta, 1 beta' and 1 omega subunit. When a sigma factor is associated with the core the holoenzyme is formed, which can initiate transcription. Mg(2+) serves as cofactor. It depends on Zn(2+) as a cofactor.

The enzyme catalyses RNA(n) + a ribonucleoside 5'-triphosphate = RNA(n+1) + diphosphate. In terms of biological role, DNA-dependent RNA polymerase catalyzes the transcription of DNA into RNA using the four ribonucleoside triphosphates as substrates. The chain is DNA-directed RNA polymerase subunit beta' from Sulfurimonas denitrificans (strain ATCC 33889 / DSM 1251) (Thiomicrospira denitrificans (strain ATCC 33889 / DSM 1251)).